The primary structure comprises 160 residues: Lymphocyte antigen 96 (160 aa).

A signal peptide spans 1–18 (MLPFLFFSTLFSSIFTEA). 3 disulfide bridges follow: Cys25-Cys51, Cys37-Cys148, and Cys95-Cys105. Asn26 carries an N-linked (GlcNAc...) asparagine glycan. Asn114 carries an N-linked (GlcNAc...) asparagine glycan. Residues 119 to 123 (FSFKG) form an interaction with lipopolysaccharide region.

Heterogeneous homomer formed from homodimers; disulfide-linked. Belongs to the lipopolysaccharide (LPS) receptor, a multi-protein complex containing at least CD14, LY96 and TLR4. Binds to the extracellular domains of TLR2 and TLR4. Ligand binding induces interaction with TLR4 and oligomerization of the complex. Post-translationally, N-glycosylated; high-mannose.

The protein resides in the secreted. It is found in the extracellular space. In terms of biological role, binds bacterial lipopolysaccharide (LPS). Cooperates with TLR4 in the innate immune response to bacterial lipopolysaccharide (LPS), and with TLR2 in the response to cell wall components from Gram-positive and Gram-negative bacteria. Enhances TLR4-dependent activation of NF-kappa-B. Cells expressing both LY96 and TLR4, but not TLR4 alone, respond to LPS. The protein is Lymphocyte antigen 96 (LY96) of Homo sapiens (Human).